A 192-amino-acid polypeptide reads, in one-letter code: UPF0149 protein YPO0911/y3298/YP_3608 (192 aa).

The protein belongs to the UPF0149 family.

The chain is UPF0149 protein YPO0911/y3298/YP_3608 from Yersinia pestis.